Here is a 167-residue protein sequence, read N- to C-terminus: NAD(P)H-quinone oxidoreductase subunit I, chloroplastic (167 aa).

4Fe-4S ferredoxin-type domains are found at residues 55–84 (GRIH…VDWK) and 95–124 (LNYS…MTEE). The [4Fe-4S] cluster site is built by cysteine 64, cysteine 67, cysteine 70, cysteine 74, cysteine 104, cysteine 107, cysteine 110, and cysteine 114.

This sequence belongs to the complex I 23 kDa subunit family. In terms of assembly, NDH is composed of at least 16 different subunits, 5 of which are encoded in the nucleus. The cofactor is [4Fe-4S] cluster.

It localises to the plastid. The protein resides in the chloroplast thylakoid membrane. The enzyme catalyses a plastoquinone + NADH + (n+1) H(+)(in) = a plastoquinol + NAD(+) + n H(+)(out). It catalyses the reaction a plastoquinone + NADPH + (n+1) H(+)(in) = a plastoquinol + NADP(+) + n H(+)(out). Functionally, NDH shuttles electrons from NAD(P)H:plastoquinone, via FMN and iron-sulfur (Fe-S) centers, to quinones in the photosynthetic chain and possibly in a chloroplast respiratory chain. The immediate electron acceptor for the enzyme in this species is believed to be plastoquinone. Couples the redox reaction to proton translocation, and thus conserves the redox energy in a proton gradient. The protein is NAD(P)H-quinone oxidoreductase subunit I, chloroplastic of Morus indica (Mulberry).